The sequence spans 165 residues: MSLSFSLLKPPLSSSNPNPFLHGTTTKLSLLPSFSALSLSSSPPSSSTTYTFPVIKAMRSMQGKVICATNDKTVNVEVVRLAPHPKYKRRVRKKKKYQAHDPDNQFKVGDWVQLDKCRPISKTKTFLAVAPEGRQSSATRPKPIQAASDELGIPLESQVEGDKTV.

A chloroplast-targeting transit peptide spans 1–57; the sequence is MSLSFSLLKPPLSSSNPNPFLHGTTTKLSLLPSFSALSLSSSPPSSSTTYTFPVIKA. The disordered stretch occupies residues 128–165; that stretch reads AVAPEGRQSSATRPKPIQAASDELGIPLESQVEGDKTV.

Component of the chloroplast small ribosomal subunit (SSU). Mature 70S chloroplast ribosomes of higher plants consist of a small (30S) and a large (50S) subunit. The 30S small subunit contains 1 molecule of ribosomal RNA (16S rRNA) and 24 different proteins. The 50S large subunit contains 3 rRNA molecules (23S, 5S and 4.5S rRNA) and 33 different proteins.

The protein resides in the plastid. Its subcellular location is the chloroplast. Functionally, component of the chloroplast ribosome (chloro-ribosome), a dedicated translation machinery responsible for the synthesis of chloroplast genome-encoded proteins, including proteins of the transcription and translation machinery and components of the photosynthetic apparatus. The protein is Small ribosomal subunit protein uS17c (RPS17) of Spinacia oleracea (Spinach).